Reading from the N-terminus, the 608-residue chain is Tyrosyl-DNA phosphodiesterase 1 (608 aa).

Residues 1–101 (MSQEGDYGRW…SDDELQPEMP (101 aa)) are disordered. S61 is subject to Phosphoserine. T147 is subject to Phosphothreonine. The residue at position 148 (S148) is a Phosphoserine. The active-site Nucleophile is the H263. K265 is a binding site for substrate. An interaction with DNA region spans residues 400 to 403 (SVGS). H493 serves as the catalytic Proton donor/acceptor. A substrate-binding site is contributed by K495.

Belongs to the tyrosyl-DNA phosphodiesterase family. As to quaternary structure, monomer. Post-translationally, phosphorylated on serine and/or threonine residues, but not on tyrosine residues. As to expression, ubiquitously expressed. Similar expression throughout the central nervous system (whole brain, amygdala, caudate nucleus, cerebellum, cerebral cortex, frontal lobe, hippocampus, medulla oblongata, occipital lobe, putamen, substantia nigra, temporal lobe, thalamus, nucleus accumbens and spinal cord) and increased expression in testis and thymus.

The protein resides in the nucleus. Its subcellular location is the cytoplasm. Functionally, DNA repair enzyme that can remove a variety of covalent adducts from DNA through hydrolysis of a 3'-phosphodiester bond, giving rise to DNA with a free 3' phosphate. Catalyzes the hydrolysis of dead-end complexes between DNA and the topoisomerase I active site tyrosine residue. Hydrolyzes 3'-phosphoglycolates on protruding 3' ends on DNA double-strand breaks due to DNA damage by radiation and free radicals. Acts on blunt-ended double-strand DNA breaks and on single-stranded DNA. Has low 3'exonuclease activity and can remove a single nucleoside from the 3'end of DNA and RNA molecules with 3'hydroxyl groups. Has no exonuclease activity towards DNA or RNA with a 3'phosphate. The sequence is that of Tyrosyl-DNA phosphodiesterase 1 (TDP1) from Homo sapiens (Human).